Consider the following 208-residue polypeptide: Histone H1t (208 aa).

Residues 1 to 12 (MSETAPAASSTL) show a composition bias toward polar residues. The disordered stretch occupies residues 1 to 39 (MSETAPAASSTLVPAPVEKPATKRRGKKPGMATARKPRG). At serine 9 the chain carries Phosphoserine. The H15 domain maps to 38–111 (RGFSVSKLIP…GASGSFKLSK (74 aa)). Residue arginine 56 is modified to Citrulline. The disordered stretch occupies residues 93–208 (GVLVQTKGTG…TDLRKAAGRK (116 aa)). Residues 121–134 (KGKKSASAKAKKLG) are compositionally biased toward basic residues. Serine 141 bears the Phosphoserine mark. The segment covering 143–154 (KSSKTKVVKKPK) has biased composition (basic residues). Residue threonine 156 is modified to Phosphothreonine. 3 positions are modified to phosphoserine: serine 163, serine 178, and serine 187. A compositionally biased stretch (basic and acidic residues) spans 199 to 208 (TDLRKAAGRK).

Belongs to the histone H1/H5 family. In terms of processing, phosphorylated in early spermatids. Citrullination at Arg-56 (H1R54ci) by PADI4 takes place within the DNA-binding site of H1 and results in its displacement from chromatin and global chromatin decondensation, thereby promoting pluripotency and stem cell maintenance. In terms of tissue distribution, testis-specific. Expressed in pachytene spermatocytes during meiotic prophase I.

It is found in the nucleus. The protein resides in the chromosome. Its function is as follows. Testis-specific histone H1 that forms less compacted chromatin compared to other H1 histone subtypes. Formation of more relaxed chromatin may be required to promote chromatin architecture required for proper chromosome regulation during meiosis, such as homologous recombination. Histones H1 act as linkers that bind to nucleosomes and compact polynucleosomes into a higher-order chromatin configuration. In Rattus norvegicus (Rat), this protein is Histone H1t.